The sequence spans 636 residues: Serine/threonine-protein kinase hal4 (636 aa).

Over residues methionine 1–serine 11 the composition is skewed to basic and acidic residues. Disordered stretches follow at residues methionine 1–valine 167 and alanine 181–alanine 261. Over residues glutamate 33–threonine 45 the composition is skewed to pro residues. Polar residues-rich tracts occupy residues alanine 56–leucine 92 and asparagine 113–lysine 124. Low complexity predominate over residues proline 140 to serine 155. Residues alanine 182–threonine 226 are compositionally biased toward polar residues. The residue at position 218 (serine 218) is a Phosphoserine. The segment covering asparagine 234–alanine 261 has biased composition (low complexity). Threonine 238 and threonine 241 each carry phosphothreonine. Serine 299 carries the phosphoserine modification. Residues glycine 351–valine 623 enclose the Protein kinase domain. ATP contacts are provided by residues isoleucine 357–valine 365 and lysine 385. The Proton acceptor role is filled by aspartate 481.

It belongs to the protein kinase superfamily. Ser/Thr protein kinase family. In terms of assembly, interacts with sty1.

It localises to the cytoplasm. It carries out the reaction L-seryl-[protein] + ATP = O-phospho-L-seryl-[protein] + ADP + H(+). The enzyme catalyses L-threonyl-[protein] + ATP = O-phospho-L-threonyl-[protein] + ADP + H(+). In terms of biological role, promotes K(+) uptake, by the potassium transporter trk1-trk2, which leads to the subsequent cellular resistance to toxic cations such as Na(+), Li(+) and Ca(2+). This Schizosaccharomyces pombe (strain 972 / ATCC 24843) (Fission yeast) protein is Serine/threonine-protein kinase hal4 (hal4).